Reading from the N-terminus, the 289-residue chain is 4-hydroxy-3-methylbut-2-enyl diphosphate reductase (289 aa).

A [4Fe-4S] cluster-binding site is contributed by cysteine 13. 2 residues coordinate (2E)-4-hydroxy-3-methylbut-2-enyl diphosphate: histidine 42 and histidine 74. The dimethylallyl diphosphate site is built by histidine 42 and histidine 74. The isopentenyl diphosphate site is built by histidine 42 and histidine 74. Residue cysteine 96 coordinates [4Fe-4S] cluster. Histidine 124 serves as a coordination point for (2E)-4-hydroxy-3-methylbut-2-enyl diphosphate. Dimethylallyl diphosphate is bound at residue histidine 124. Histidine 124 is a binding site for isopentenyl diphosphate. The active-site Proton donor is the glutamate 126. Threonine 165 is a binding site for (2E)-4-hydroxy-3-methylbut-2-enyl diphosphate. Cysteine 193 is a [4Fe-4S] cluster binding site. Residues serine 221, asparagine 223, and serine 265 each coordinate (2E)-4-hydroxy-3-methylbut-2-enyl diphosphate. Dimethylallyl diphosphate-binding residues include serine 221, asparagine 223, and serine 265. Serine 221, asparagine 223, and serine 265 together coordinate isopentenyl diphosphate.

The protein belongs to the IspH family. [4Fe-4S] cluster is required as a cofactor.

The catalysed reaction is isopentenyl diphosphate + 2 oxidized [2Fe-2S]-[ferredoxin] + H2O = (2E)-4-hydroxy-3-methylbut-2-enyl diphosphate + 2 reduced [2Fe-2S]-[ferredoxin] + 2 H(+). It catalyses the reaction dimethylallyl diphosphate + 2 oxidized [2Fe-2S]-[ferredoxin] + H2O = (2E)-4-hydroxy-3-methylbut-2-enyl diphosphate + 2 reduced [2Fe-2S]-[ferredoxin] + 2 H(+). It participates in isoprenoid biosynthesis; dimethylallyl diphosphate biosynthesis; dimethylallyl diphosphate from (2E)-4-hydroxy-3-methylbutenyl diphosphate: step 1/1. The protein operates within isoprenoid biosynthesis; isopentenyl diphosphate biosynthesis via DXP pathway; isopentenyl diphosphate from 1-deoxy-D-xylulose 5-phosphate: step 6/6. Highly sensitive to dioxygen. In terms of biological role, catalyzes the conversion of 1-hydroxy-2-methyl-2-(E)-butenyl 4-diphosphate (HMBPP) into a mixture of isopentenyl diphosphate (IPP) and dimethylallyl diphosphate (DMAPP). Acts in the terminal step of the DOXP/MEP pathway for isoprenoid precursor biosynthesis. The polypeptide is 4-hydroxy-3-methylbut-2-enyl diphosphate reductase (Aquifex aeolicus (strain VF5)).